We begin with the raw amino-acid sequence, 442 residues long: tRNA modification GTPase MnmE (442 aa).

(6S)-5-formyl-5,6,7,8-tetrahydrofolate-binding residues include arginine 23, glutamate 82, and lysine 121. The region spanning 215-364 (GTSLILAGKP…VKQALIQWMQ (150 aa)) is the TrmE-type G domain. Asparagine 225 provides a ligand contact to K(+). Residues 225–230 (NVGKSS), 244–250 (THIPGTT), 269–272 (DTAG), and 325–328 (NKAD) each bind GTP. Residue serine 229 coordinates Mg(2+). Positions 244, 246, and 249 each coordinate K(+). A Mg(2+)-binding site is contributed by threonine 250. Residue lysine 442 coordinates (6S)-5-formyl-5,6,7,8-tetrahydrofolate.

The protein belongs to the TRAFAC class TrmE-Era-EngA-EngB-Septin-like GTPase superfamily. TrmE GTPase family. In terms of assembly, homodimer. Heterotetramer of two MnmE and two MnmG subunits. K(+) is required as a cofactor.

The protein localises to the cytoplasm. In terms of biological role, exhibits a very high intrinsic GTPase hydrolysis rate. Involved in the addition of a carboxymethylaminomethyl (cmnm) group at the wobble position (U34) of certain tRNAs, forming tRNA-cmnm(5)s(2)U34. The polypeptide is tRNA modification GTPase MnmE (Chlamydia pneumoniae (Chlamydophila pneumoniae)).